The following is a 1021-amino-acid chain: Sodium/potassium-transporting ATPase subunit alpha-1 (1021 aa).

Positions 1–5 are excised as a propeptide; it reads MGKGV. Residues 1 to 11 are compositionally biased toward basic and acidic residues; that stretch reads MGKGVGRDKYE. The segment at 1-36 is disordered; sequence MGKGVGRDKYEPAAVSEHGDKKKAKKERDMDELKKE. Over 4–85 the chain is Cytoplasmic; sequence GVGRDKYEPA…NALTPPPTTP (82 aa). Lysine 9 is subject to N6-acetyllysine. The residue at position 10 (tyrosine 10) is a Phosphotyrosine. Serine 16 carries the post-translational modification Phosphoserine; by PKC. An N6-acetyllysine modification is found at lysine 21. The span at 26 to 36 shows a compositional bias: basic and acidic residues; that stretch reads KERDMDELKKE. Phosphoserine occurs at positions 38 and 45. Positions 80–82 are phosphoinositide-3 kinase binding; the sequence is PPP. Residues 86–106 traverse the membrane as a helical segment; that stretch reads EWVKFCRQLFGGFSMLLWIGA. The Extracellular segment spans residues 107-129; sequence ILCFLAYGIQAATEEEPQNDNLY. A helical transmembrane segment spans residues 130 to 150; sequence LGVVLSAVVIITGCFSYYQEA. The Cytoplasmic segment spans residues 151–286; sequence KSSKIMESFK…GGQTPIAAEI (136 aa). The disordered stretch occupies residues 214–233; that stretch reads SSLTGESEPQTRSPDFTNEN. Position 226 is a phosphoserine (serine 226). Phosphotyrosine is present on tyrosine 258. Residues 287–306 traverse the membrane as a helical segment; it reads EHFIHIITGVAVFLGVSFFI. Over 307–318 the chain is Extracellular; sequence LSLILEYTWLEA. The chain crosses the membrane as a helical span at residues 319 to 336; the sequence is VIFLIGIIVANVPEGLLA. The Cytoplasmic portion of the chain corresponds to 337–770; sequence TVTVCLTLTA…EEGRLIFDNL (434 aa). Residue aspartate 374 is the 4-aspartylphosphate intermediate of the active site. Serine 450 and serine 482 each carry phosphoserine. Lysine 485 is an ATP binding site. Residue tyrosine 540 is modified to Phosphotyrosine. A mediates interaction with SCN7A region spans residues 594–715; the sequence is RAAVPDAVGK…QGAIVAVTGD (122 aa). Residue lysine 659 is modified to N6-succinyllysine. Residues serine 666 and serine 673 each carry the phosphoserine modification. Mg(2+) contacts are provided by aspartate 715 and aspartate 719. Residues 771–790 traverse the membrane as a helical segment; it reads KKSIAYTLTSNIPEITPFLI. Residues 791–800 are Extracellular-facing; sequence FIIANIPLPL. A helical membrane pass occupies residues 801–821; that stretch reads GTVTILCIDLGTDMVPAISLA. The Cytoplasmic portion of the chain corresponds to 822 to 841; it reads YEQAESDIMKRQPRNPKTDK. Residues 842 to 864 traverse the membrane as a helical segment; that stretch reads LVNERLISMAYGQIGMIQALGGF. Topologically, residues 865 to 916 are extracellular; the sequence is FTYFVILAENGFLPTHLLGLRVDWDDRWINDVEDSYGQQWTYEQRKIVEFTC. A helical membrane pass occupies residues 917 to 936; that stretch reads HTAFFVSIVVVQWADLVICK. The Cytoplasmic segment spans residues 937–949; sequence TRRNSVFQQGMKN. Residue serine 941 is modified to Phosphoserine; by PKA. The chain crosses the membrane as a helical span at residues 950 to 968; sequence KILIFGLFEETALAAFLSY. The Extracellular segment spans residues 969 to 983; sequence CPGMGVALRMYPLKP. The chain crosses the membrane as a helical span at residues 984 to 1004; sequence TWWFCAFPYSLLIFVYDEVRK. Over 1005–1021 the chain is Cytoplasmic; that stretch reads LIIRRRPGGWVEKETYY.

This sequence belongs to the cation transport ATPase (P-type) (TC 3.A.3) family. Type IIC subfamily. As to quaternary structure, the sodium/potassium-transporting ATPase is composed of a catalytic alpha subunit, an auxiliary non-catalytic beta subunit and an additional regulatory subunit. Interacts with regulatory subunit FXYD1. Interacts with regulatory subunit FXYD3. Interacts with SIK1. Interacts with SLC35G1 and STIM1. Interacts with CLN3; this interaction regulates the sodium/potassium-transporting ATPase complex localization at the plasma membrane. Interacts with SCN7A; activates ATP1A1 P-type sodium:potassium-exchanging transporter activity which indirectly signals to nearby neurons to regulate sodium homeostasis. Post-translationally, phosphorylation on Tyr-10 modulates pumping activity. Phosphorylation of Ser-941 by PKA modulates the response of ATP1A1 to PKC. Dephosphorylation by protein phosphatase 2A (PP2A) following increases in intracellular sodium, leading to increase catalytic activity.

The protein resides in the cell membrane. It localises to the basolateral cell membrane. It is found in the sarcolemma. Its subcellular location is the cell projection. The protein localises to the axon. The protein resides in the melanosome. The enzyme catalyses K(+)(out) + Na(+)(in) + ATP + H2O = K(+)(in) + Na(+)(out) + ADP + phosphate + H(+). In terms of biological role, this is the catalytic component of the active enzyme, which catalyzes the hydrolysis of ATP coupled with the exchange of sodium and potassium ions across the plasma membrane. This action creates the electrochemical gradient of sodium and potassium ions, providing the energy for active transport of various nutrients. Could also be part of an osmosensory signaling pathway that senses body-fluid sodium levels and controls salt intake behavior as well as voluntary water intake to regulate sodium homeostasis. This is Sodium/potassium-transporting ATPase subunit alpha-1 (ATP1A1) from Canis lupus familiaris (Dog).